Reading from the N-terminus, the 653-residue chain is Intermembrane lipid transfer protein vps13l (653 aa).

The B box-type zinc finger occupies 5–49; it reads ISELKCQQHDKLVTIYCCACDAYFCKKCDKEKHSQDDNQEDSLHI. 4 residues coordinate Zn(2+): Cys-10, His-13, Cys-32, and His-37. Disordered regions lie at residues 159–232, 248–420, and 627–653; these read NLID…NRKK, HILN…EDDS, and EKSN…PNEN. Residues 195 to 213 show a composition bias toward low complexity; it reads SPSPSRSSESNSTTNNNNN. The span at 266–277 shows a compositional bias: acidic residues; that stretch reads DYDDDDDNDDDN. The span at 278–293 shows a compositional bias: low complexity; sequence NNNNNNNNNNNNNNNN. Basic and acidic residues predominate over residues 314–330; it reads ETEKEIENVENKIDNKP. Positions 366 to 381 are enriched in acidic residues; the sequence is IFEEEEEEEEDEDEVG.

Belongs to the VPS13 family.

The protein resides in the membrane. Its function is as follows. Mediates the transfer of lipids between membranes at organelle contact sites. This Dictyostelium discoideum (Social amoeba) protein is Intermembrane lipid transfer protein vps13l (vps13l).